The primary structure comprises 315 residues: Aspartate carbamoyltransferase catalytic subunit (315 aa).

2 residues coordinate carbamoyl phosphate: arginine 65 and threonine 66. Lysine 93 is a binding site for L-aspartate. Carbamoyl phosphate-binding residues include arginine 115, histidine 145, and glutamine 148. L-aspartate-binding residues include arginine 179 and arginine 234. Residues glycine 275 and proline 276 each contribute to the carbamoyl phosphate site.

The protein belongs to the aspartate/ornithine carbamoyltransferase superfamily. ATCase family. Heterododecamer (2C3:3R2) of six catalytic PyrB chains organized as two trimers (C3), and six regulatory PyrI chains organized as three dimers (R2).

The catalysed reaction is carbamoyl phosphate + L-aspartate = N-carbamoyl-L-aspartate + phosphate + H(+). It functions in the pathway pyrimidine metabolism; UMP biosynthesis via de novo pathway; (S)-dihydroorotate from bicarbonate: step 2/3. Its function is as follows. Catalyzes the condensation of carbamoyl phosphate and aspartate to form carbamoyl aspartate and inorganic phosphate, the committed step in the de novo pyrimidine nucleotide biosynthesis pathway. The sequence is that of Aspartate carbamoyltransferase catalytic subunit from Xanthomonas axonopodis pv. citri (strain 306).